The following is a 51-amino-acid chain: rpoE leader peptide (51 aa).

Functionally, a short protein whose stop codon overlaps with the start codon of downstream rpoE; a premature stop codon at position 12 results in decreased expression of ECF sigma factor RpoE, thus they are translationally coupled. The chain is rpoE leader peptide from Escherichia coli (strain K12).